The following is a 417-amino-acid chain: RH-like protein (417 aa).

A run of 11 helical transmembrane segments spans residues 12-32 (CLPL…FFFT), 44-64 (LVAS…GLGF), 77-97 (VAFN…LDGF), 125-145 (ISMN…MELV), 172-192 (IHVF…KPLP), 203-223 (TSPS…WPTF), 238-258 (VFST…VSSL), 265-285 (INMT…GASC), 287-307 (VIHS…ISFG), 331-351 (TFGL…ALRV), and 358-378 (MIGF…AMSI).

It belongs to the ammonium transporter (TC 2.A.49) family. Rh subfamily.

The protein resides in the membrane. Its function is as follows. May be part of an oligomeric complex which is likely to have a transport or channel function in the erythrocyte membrane. The protein is RH-like protein of Macaca fascicularis (Crab-eating macaque).